The primary structure comprises 345 residues: Solute carrier family 25 member 43 (345 aa).

3 Solcar repeats span residues 11–100 (TSSQ…IDEL), 104–195 (SQWR…QERH), and 199–297 (TSLQ…LYRN). 6 consecutive transmembrane segments (helical) span residues 16 to 36 (LMCVGFAGIFSKTVTSPLEVV), 67 to 87 (FWKGNMVSCLRLFPYSAIHLA), 109 to 129 (IVAGGLAGISAALATYPLEVV), 165 to 185 (GFSLTVLGAVPFSVGCYAVYI), 204 to 224 (FINGCLAAGVAQTLSFPFETV), and 261 to 281 (VMALWSGLTANMVKIVPYFGL).

It belongs to the mitochondrial carrier (TC 2.A.29) family.

It is found in the mitochondrion inner membrane. In Danio rerio (Zebrafish), this protein is Solute carrier family 25 member 43 (slc25a43).